Reading from the N-terminus, the 427-residue chain is Peptidase B (427 aa).

Mn(2+) contacts are provided by K195 and D200. The active site involves K207. Mn(2+)-binding residues include D218, D277, and E279. The active site involves R281.

The protein belongs to the peptidase M17 family. As to quaternary structure, homohexamer. It depends on Mn(2+) as a cofactor.

Its subcellular location is the cytoplasm. It catalyses the reaction Release of an N-terminal amino acid, Xaa, from a peptide or arylamide. Xaa is preferably Glu or Asp but may be other amino acids, including Leu, Met, His, Cys and Gln.. Probably plays an important role in intracellular peptide degradation. The protein is Peptidase B of Shigella dysenteriae serotype 1 (strain Sd197).